The following is a 735-amino-acid chain: MAAGGAVAAAPECRLLPYALHKWSSFSSTYLPENILVDKPNDQSSRWSSESNYPPQYLILKLERPAIVQNITFGKYEKTHVCNLKKFKVFGGMNEENMTELLSSGLKNDYNKETFTLKHKIDEQMFPCRFIKIVPLLSWGPSFNFSIWYVELSGIDDPDIVQPCLNWYSKYREQEAIRLCLKHFRQHNYTEAFESLQKKTKIALEHPMLTDMHDKLVLKGDFDACEELIEKAVNDGLFNQYISQQEYKPRWSQIIPKSTKGDGEDNRPGMRGGHQMVIDVQTETVYLFGGWDGTQDLADFWAYSVKENQWTCISRDTEKENGPSARSCHKMCIDIQRRQIYTLGRYLDSSVRNSKSLKSDFYRYDIDTNTWMLLSEDTAADGGPKLVFDHQMCMDSEKHMIYTFGGRILTCNGSVDDSRASEPQFSGLFAFNCQCQTWKLLREDSCNAGPEDIQSRIGHCMLFHSKNRCLYVFGGQRSKTYLNDFFSYDVDSDHVDIISDGTKKDSGMVPMTGFTQRATIDPELNEIHVLSGLSKDKEKREENVRNSFWIYDIVRNSWSCVYKNDQAAKENLSKSLQEEEPCPRFAHQLVYDELHKVHYLFGGNPGKSCSPKMRLDDFWSLKLCRPSKDYLLRHCKYLIRKHRFEEKAQMDPLSALKYLQNDLYITVDHSDPEETKEFQLLASALFKSGSDFTALGFSDVDHTYAQRTQLFDTLVNFFPDSMTPPKGNLVDLITL.

Alanine 2 is modified (N-acetylalanine). The LisH domain maps to 172–204; that stretch reads REQEAIRLCLKHFRQHNYTEAFESLQKKTKIAL. Residues 206 to 258 enclose the CTLH domain; it reads HPMLTDMHDKLVLKGDFDACEELIEKAVNDGLFNQYISQQEYKPRWSQIIPKS. Kelch repeat units follow at residues 284–330, 339–391, 400–458, 469–515, 526–578, and 597–651; these read TVYL…SCHK, QIYT…FDHQ, MIYT…SRIG, CLYV…TGFT, EIHV…SLQE, and VHYL…AQMD.

As to quaternary structure, homodimer; may form higher oligomers. Identified in the CTLH complex that contains GID4, RANBP9 and/or RANBP10, MKLN1, MAEA, RMND5A (or alternatively its paralog RMND5B), GID8, ARMC8, WDR26 and YPEL5. Within this complex, MAEA, RMND5A (or alternatively its paralog RMND5B), GID8, WDR26, and RANBP9 and/or RANBP10 form the catalytic core, while GID4, MKLN1, ARMC8 and YPEL5 have ancillary roles. Interacts with RANBP9. Part of a complex consisting of RANBP9, MKLN1 and GID8. Interacts with GABRA1. Interacts with the C-terminal tail of PTGER3.

It is found in the cytoplasm. The protein resides in the cell projection. It localises to the ruffle. The protein localises to the cell cortex. Its subcellular location is the synapse. It is found in the postsynapse. Its function is as follows. Component of the CTLH E3 ubiquitin-protein ligase complex that selectively accepts ubiquitin from UBE2H and mediates ubiquitination and subsequent proteasomal degradation of the transcription factor HBP1. Required for internalization of the GABA receptor GABRA1 from the cell membrane via endosomes and subsequent GABRA1 degradation. Acts as a mediator of cell spreading and cytoskeletal responses to the extracellular matrix component THBS1. The chain is Muskelin (Mkln1) from Rattus norvegicus (Rat).